Reading from the N-terminus, the 347-residue chain is Phenylalanine--tRNA ligase alpha subunit (347 aa).

Glu-262 provides a ligand contact to Mg(2+).

The protein belongs to the class-II aminoacyl-tRNA synthetase family. Phe-tRNA synthetase alpha subunit type 1 subfamily. As to quaternary structure, tetramer of two alpha and two beta subunits. The cofactor is Mg(2+).

The protein localises to the cytoplasm. It carries out the reaction tRNA(Phe) + L-phenylalanine + ATP = L-phenylalanyl-tRNA(Phe) + AMP + diphosphate + H(+). This chain is Phenylalanine--tRNA ligase alpha subunit, found in Roseiflexus castenholzii (strain DSM 13941 / HLO8).